Reading from the N-terminus, the 366-residue chain is DNA replication and repair protein RecF (366 aa).

ATP is bound at residue 30-37 (GRNAQGKT).

It belongs to the RecF family.

It localises to the cytoplasm. In terms of biological role, the RecF protein is involved in DNA metabolism; it is required for DNA replication and normal SOS inducibility. RecF binds preferentially to single-stranded, linear DNA. It also seems to bind ATP. This chain is DNA replication and repair protein RecF, found in Streptococcus thermophilus (strain CNRZ 1066).